We begin with the raw amino-acid sequence, 232 residues long: Lipoarabinomannan carrier protein LprG (232 aa).

The signal sequence occupies residues 1-21 (MQTRLTAILAAFLTAVALLAG). Residue cysteine 22 is the site of N-palmitoyl cysteine attachment. Cysteine 22 carries the S-diacylglycerol cysteine lipid modification.

The protein belongs to the LppX/LprAFG lipoprotein family. Post-translationally, modified by Lgt on Cys-22 with an S-linked diacylglyceral, signal peptide is removed by LspA, Cys-22 is further modifed with a fatty acid on its amino group by Lnt yielding a triacylated protein.

The protein resides in the cell inner membrane. Functionally, helps membrane protein MHAS_02168/C731_2106 (P55) transport triacylglycerides (TAG) across the inner cell membrane into the periplasm and probably ultimately to the outer membrane. Binds TAG in its hydrophobic cavity and transfers it between lipid bilayers. TAG probably regulates lipid metabolism and growth regulation and plays a structural role in the outer membrane. Also binds mannosides, lipoarabinomannan and lipomannan and various glycolipids in the same cavity. The lprG-MHAS_02167/C731_2107 operon complements the vancomycin sensitivity of an M.smegmatis knockout of the same operon. The protein is Lipoarabinomannan carrier protein LprG of Mycolicibacterium hassiacum (strain DSM 44199 / CIP 105218 / JCM 12690 / 3849) (Mycobacterium hassiacum).